A 351-amino-acid polypeptide reads, in one-letter code: Molybdate-binding protein MolA (351 aa).

Residues 1-21 (MKLKSLLIACLLSSLSFSALA) form the signal peptide. Residues 41–322 (RAVVLQHQTL…WLAKALYPQR (282 aa)) form the Fe/B12 periplasmic-binding domain. Residues 47–48 (HQ), Y217, R264, and 300–301 (GY) each bind molybdate.

Belongs to the bacterial solute-binding protein 8 family. As to quaternary structure, the complex is composed of two ATP-binding proteins (MolC), two transmembrane proteins (MolB) and a solute-binding protein (MolA).

Its subcellular location is the periplasm. Its activity is regulated as follows. The MolBCA complex shows a decrease in affinity in the presence of increasing concentrations of substrate and nucleotide. Functionally, part of the ABC transporter complex MolBCA involved in molybdate import. Functions as a low-affinity molybdate transporter. Binds to both molybdate and tungstate, but not to sulfate or phosphate. This is Molybdate-binding protein MolA from Haemophilus influenzae (strain ATCC 51907 / DSM 11121 / KW20 / Rd).